We begin with the raw amino-acid sequence, 82 residues long: Small ribosomal subunit protein uS17c (82 aa).

It belongs to the universal ribosomal protein uS17 family. Part of the 30S ribosomal subunit.

It localises to the plastid. The protein resides in the chloroplast. One of the primary rRNA binding proteins, it binds specifically to the 5'-end of 16S ribosomal RNA. This is Small ribosomal subunit protein uS17c (rps17) from Emiliania huxleyi (Coccolithophore).